A 672-amino-acid chain; its full sequence is Protein seu-1 (672 aa).

Disordered regions lie at residues 1–463 (MSSI…AGTE) and 576–672 (LAPP…LKHL). Residues 8–20 (NDNRRPTFRDHRT) are compositionally biased toward basic and acidic residues. Positions 25 to 34 (GRGGSGGGGR) are enriched in gly residues. The span at 62–85 (RSQDHRQRSPEVRRHRSPEKESKD) shows a compositional bias: basic and acidic residues. Over residues 87 to 105 (VVTSTGSSRGATSASVTSS) the composition is skewed to low complexity. Composition is skewed to basic and acidic residues over residues 107 to 138 (RRHE…DADR), 189 to 226 (VSRH…KSNG), 234 to 268 (RRRE…KVED), and 289 to 306 (EQAK…ESHQ). Over residues 307 to 317 (SAHSAAVSNAS) the composition is skewed to low complexity. Positions 322–343 (SEEELDYEEDDIDVDLDGDIDV) are enriched in acidic residues. Basic and acidic residues-rich tracts occupy residues 366 to 375 (NDVKDETMEE), 382 to 396 (PEKK…DDKD), 410 to 424 (RRED…SDHH), 436 to 447 (RATDHKESRRSE), 607 to 626 (SFGD…RHMD), and 636 to 659 (DHRV…ERGF).

Highly expressed in intestinal cells, lateral hypodermal (seam) cells, Pn.p ventral hypodermal cells, and spermatheca. Expressed at low levels in the ventral nerve cord.

It localises to the nucleus. Functionally, together with unc-5, involved in touch neuron axon guidance. During gonad morphogenesis, plays a role in the unc-5-/unc-6-mediated migration of distal tip cells along the body. This is Protein seu-1 from Caenorhabditis elegans.